A 97-amino-acid chain; its full sequence is Carboxysome shell protein CsoS1B (97 aa).

Residues 8–93 (ALGMIETRGL…PHKEVEPVLT (86 aa)) form the BMC domain.

It belongs to the bacterial microcompartments protein family. CsoS1 subfamily. In terms of assembly, homohexamer with a small central pore.

The protein resides in the carboxysome. Functionally, one of shell proteins of the carboxysome, a polyhedral inclusion where RuBisCO (ribulose bisphosphate carboxylase, ccbL-ccbS) is sequestered. Assembles into hexamers which make sheets that form the facets of the polyhedral carboxysome. The shell probably limits the diffusion of CO(2) into and out of the carboxysome. The chain is Carboxysome shell protein CsoS1B from Hydrogenovibrio crunogenus (strain DSM 25203 / XCL-2) (Thiomicrospira crunogena).